The following is a 404-amino-acid chain: Lupus La protein homolog (404 aa).

Positions 7 to 99 constitute an HTH La-type RNA-binding domain; that stretch reads NEKMAALEAK…RRSPSKPLPE (93 aa). Ser92 and Ser94 each carry phosphoserine. Positions 111 to 187 constitute an RRM domain; the sequence is RSVYIKGFPT…TDLLILFKED (77 aa). Lys116 carries the post-translational modification N6-acetyllysine. Thr120 carries the post-translational modification Phosphothreonine. An N6-acetyllysine modification is found at Lys128. Ser225 carries the phosphoserine modification. One can recognise a xRRM domain in the interval 227 to 348; the sequence is EEKIGCLLKF…KGKGNKAAQA (122 aa). N6-acetyllysine occurs at positions 328 and 341. Residues 329–342 are compositionally biased toward basic residues; the sequence is WKSKGRRFKGKGKG. The disordered stretch occupies residues 329–404; the sequence is WKSKGRRFKG…QKTENGAGDQ (76 aa). Over residues 343 to 354 the composition is skewed to low complexity; the sequence is NKAAQAGSAKGK. At Lys360 the chain carries N6-acetyllysine. Position 362 is a phosphothreonine (Thr362). Ser366 is modified (phosphoserine). Basic and acidic residues predominate over residues 381-391; that stretch reads RAREETDKEPP.

Interacts with DDX15. May interact with RUFY1. Post-translationally, phosphorylated in the C-terminal part of the protein.

It is found in the nucleus. Functionally, binds to the 3' poly(U) terminus of nascent RNA polymerase III transcripts, protecting them from exonuclease digestion and facilitating their folding and maturation. The sequence is that of Lupus La protein homolog (SSB) from Bos taurus (Bovine).